A 122-amino-acid chain; its full sequence is Ribosome-binding factor A (122 aa).

The protein belongs to the RbfA family. Monomer. Binds 30S ribosomal subunits, but not 50S ribosomal subunits or 70S ribosomes.

The protein localises to the cytoplasm. Its function is as follows. One of several proteins that assist in the late maturation steps of the functional core of the 30S ribosomal subunit. Associates with free 30S ribosomal subunits (but not with 30S subunits that are part of 70S ribosomes or polysomes). Required for efficient processing of 16S rRNA. May interact with the 5'-terminal helix region of 16S rRNA. The protein is Ribosome-binding factor A of Pelobacter propionicus (strain DSM 2379 / NBRC 103807 / OttBd1).